The following is a 451-amino-acid chain: Probable D-serine dehydratase (451 aa).

Lys-119 is subject to N6-(pyridoxal phosphate)lysine.

The protein belongs to the serine/threonine dehydratase family. DsdA subfamily. Requires pyridoxal 5'-phosphate as cofactor.

The catalysed reaction is D-serine = pyruvate + NH4(+). This is Probable D-serine dehydratase from Acidovorax ebreus (strain TPSY) (Diaphorobacter sp. (strain TPSY)).